The sequence spans 373 residues: Erythronate-4-phosphate dehydrogenase (373 aa).

Substrate-binding residues include Ser45 and Thr67. NAD(+)-binding positions include Asp147, 206–208 (ASR), and Asp232. Arg208 is an active-site residue. Residue Glu237 is part of the active site. His254 serves as the catalytic Proton donor. Gly257 lines the NAD(+) pocket. Tyr258 serves as a coordination point for substrate.

It belongs to the D-isomer specific 2-hydroxyacid dehydrogenase family. PdxB subfamily. In terms of assembly, homodimer.

It localises to the cytoplasm. It catalyses the reaction 4-phospho-D-erythronate + NAD(+) = (R)-3-hydroxy-2-oxo-4-phosphooxybutanoate + NADH + H(+). Its pathway is cofactor biosynthesis; pyridoxine 5'-phosphate biosynthesis; pyridoxine 5'-phosphate from D-erythrose 4-phosphate: step 2/5. Catalyzes the oxidation of erythronate-4-phosphate to 3-hydroxy-2-oxo-4-phosphonooxybutanoate. The chain is Erythronate-4-phosphate dehydrogenase from Tolumonas auensis (strain DSM 9187 / NBRC 110442 / TA 4).